A 468-amino-acid polypeptide reads, in one-letter code: UDP-N-acetylmuramoyl-L-alanine--L-glutamate ligase (468 aa).

ATP is bound at residue 122–128 (GTKGKST).

This sequence belongs to the MurCDEF family. MurD2 subfamily.

Its subcellular location is the cytoplasm. It carries out the reaction UDP-N-acetyl-alpha-D-muramoyl-L-alanine + L-glutamate + ATP = UDP-N-acetyl-alpha-D-muramoyl-L-alanyl-L-glutamate + ADP + phosphate + H(+). It functions in the pathway cell wall biogenesis; peptidoglycan biosynthesis. Cell wall formation. Catalyzes the addition of L-glutamate to the nucleotide precursor UDP-N-acetylmuramoyl-L-alanine. Has weak activity with D-glutamate. This chain is UDP-N-acetylmuramoyl-L-alanine--L-glutamate ligase, found in Xanthomonas oryzae pv. oryzae (strain MAFF 311018).